A 259-amino-acid polypeptide reads, in one-letter code: Type III pantothenate kinase (259 aa).

Residue 6-13 (DCGNTNTL) participates in ATP binding. Residue 108–111 (GADR) coordinates substrate. Aspartate 110 acts as the Proton acceptor in catalysis. Residue aspartate 130 participates in K(+) binding. Threonine 133 serves as a coordination point for ATP. Threonine 185 serves as a coordination point for substrate.

The protein belongs to the type III pantothenate kinase family. Homodimer. NH4(+) is required as a cofactor. It depends on K(+) as a cofactor.

It is found in the cytoplasm. It carries out the reaction (R)-pantothenate + ATP = (R)-4'-phosphopantothenate + ADP + H(+). It functions in the pathway cofactor biosynthesis; coenzyme A biosynthesis; CoA from (R)-pantothenate: step 1/5. Functionally, catalyzes the phosphorylation of pantothenate (Pan), the first step in CoA biosynthesis. The protein is Type III pantothenate kinase of Maricaulis maris (strain MCS10) (Caulobacter maris).